A 177-amino-acid polypeptide reads, in one-letter code: Large ribosomal subunit protein uL6 (177 aa).

The protein belongs to the universal ribosomal protein uL6 family. Part of the 50S ribosomal subunit.

Its function is as follows. This protein binds to the 23S rRNA, and is important in its secondary structure. It is located near the subunit interface in the base of the L7/L12 stalk, and near the tRNA binding site of the peptidyltransferase center. The sequence is that of Large ribosomal subunit protein uL6 from Pseudomonas fluorescens (strain ATCC BAA-477 / NRRL B-23932 / Pf-5).